A 289-amino-acid polypeptide reads, in one-letter code: 3-methyl-2-oxobutanoate hydroxymethyltransferase (289 aa).

The segment covering 1 to 10 (MSDSKSSAST) has biased composition (low complexity). The interval 1 to 33 (MSDSKSSASTSEDRLYGSAPSHDVPKRKTRTHH) is disordered. Mg(2+) contacts are provided by Asp-70 and Asp-109. Residues 70 to 71 (DS), Asp-109, and Lys-139 each bind 3-methyl-2-oxobutanoate. Glu-141 serves as a coordination point for Mg(2+). The active-site Proton acceptor is Glu-207.

It belongs to the PanB family. Homodecamer; pentamer of dimers. Mg(2+) is required as a cofactor.

The protein resides in the cytoplasm. It catalyses the reaction 3-methyl-2-oxobutanoate + (6R)-5,10-methylene-5,6,7,8-tetrahydrofolate + H2O = 2-dehydropantoate + (6S)-5,6,7,8-tetrahydrofolate. It functions in the pathway cofactor biosynthesis; (R)-pantothenate biosynthesis; (R)-pantoate from 3-methyl-2-oxobutanoate: step 1/2. In terms of biological role, catalyzes the reversible reaction in which hydroxymethyl group from 5,10-methylenetetrahydrofolate is transferred onto alpha-ketoisovalerate to form ketopantoate. In Rhodococcus jostii (strain RHA1), this protein is 3-methyl-2-oxobutanoate hydroxymethyltransferase.